We begin with the raw amino-acid sequence, 631 residues long: tRNA uridine 5-carboxymethylaminomethyl modification enzyme MnmG (631 aa).

15-20 (GAGHAG) is an FAD binding site. The segment at 214 to 233 (YSKTEEEPGDKEPRHFSFTS) is disordered. 276-290 (GPRYCPSIETKVVRF) is an NAD(+) binding site.

This sequence belongs to the MnmG family. Homodimer. Heterotetramer of two MnmE and two MnmG subunits. FAD is required as a cofactor.

It is found in the cytoplasm. NAD-binding protein involved in the addition of a carboxymethylaminomethyl (cmnm) group at the wobble position (U34) of certain tRNAs, forming tRNA-cmnm(5)s(2)U34. In Lactobacillus delbrueckii subsp. bulgaricus (strain ATCC BAA-365 / Lb-18), this protein is tRNA uridine 5-carboxymethylaminomethyl modification enzyme MnmG.